Reading from the N-terminus, the 201-residue chain is Recombination protein RecR (201 aa).

The C4-type zinc finger occupies 60 to 75; sequence CSCCGNVDTIDPCTVC. The region spanning 83–178 is the Toprim domain; it reads SVIIVVEDVS…KITRLAHGVP (96 aa).

It belongs to the RecR family.

May play a role in DNA repair. It seems to be involved in an RecBC-independent recombinational process of DNA repair. It may act with RecF and RecO. This Agrobacterium fabrum (strain C58 / ATCC 33970) (Agrobacterium tumefaciens (strain C58)) protein is Recombination protein RecR.